The chain runs to 1521 residues: Suppressor of Ty 6 homolog (1521 aa).

Residues 1–204 (MDFIDNQAEE…EGAEDDARDV (204 aa)) form a disordered region. A compositionally biased stretch (basic residues) spans 26 to 41 (KKMKMAKDKLKKKKKV). The short motif at 26 to 42 (KKMKMAKDKLKKKKKVV) is the Nuclear localization signal element. 2 stretches are compositionally biased toward acidic residues: residues 45–56 (SDEDEDDEDDEE) and 67–76 (ADEDDEEEDA). Over residues 77–89 (RSEKSDRSRRSEI) the composition is skewed to basic and acidic residues. A compositionally biased stretch (acidic residues) spans 90–103 (NDELDDEDLDLIDE). A compositionally biased stretch (basic and acidic residues) spans 127–149 (PIRRSNQDDDDLQSERGSDDGDK). The span at 167–177 (RSEDDFIEDDG) shows a compositional bias: acidic residues. One can recognise an S1 motif domain in the interval 1182–1251 (LNAGRPGGCV…EKFSILLSCK (70 aa)). The SH2 domain maps to 1299–1388 (HPNFHNVSYE…IARFVLPMIQ (90 aa)). The segment at 1490–1521 (GIRSSLSYRPTGRTGPPPSAPYQQPPQQQYYR) is disordered. Pro residues predominate over residues 1504–1513 (GPPPSAPYQQ).

It belongs to the SPT6 family. In terms of assembly, interacts with glp-1 and lin-12.

The protein resides in the nucleus. Histone H3-H4 chaperone that plays a role in maintenance of chromatin structure during RNA polymerase II transcription elongation. May be required for several aspects of morphogenesis of C.briggsae, including regulation of division in the germline and gut and specification of ventral-uterine precursor cell fate. The protein is Suppressor of Ty 6 homolog (emb-5) of Caenorhabditis briggsae.